Consider the following 91-residue polypeptide: MDKVKKPVLTEKTIRLLEKKQYSFDVDLKSNKTEVKHWIEKFFNVEVRAMNSHRPPGKKKYAGSIVTHSVRYKRMIITLKPGYSIPLFPNE.

The protein belongs to the universal ribosomal protein uL23 family. In terms of assembly, part of the 50S ribosomal subunit.

It localises to the plastid. The protein resides in the chloroplast. Binds to 23S rRNA. This chain is Large ribosomal subunit protein uL23c (rpl23), found in Huperzia lucidula (Shining clubmoss).